The sequence spans 432 residues: Phosphomethylpyrimidine synthase (432 aa).

Substrate is bound by residues N69, M98, Y127, H163, 185–187, 226–229, and E265; these read SRG and DACR. H269 provides a ligand contact to Zn(2+). Y292 contacts substrate. Zn(2+) is bound at residue H333. Positions 409, 412, and 416 each coordinate [4Fe-4S] cluster.

It belongs to the ThiC family. [4Fe-4S] cluster is required as a cofactor.

It catalyses the reaction 5-amino-1-(5-phospho-beta-D-ribosyl)imidazole + S-adenosyl-L-methionine = 4-amino-2-methyl-5-(phosphooxymethyl)pyrimidine + CO + 5'-deoxyadenosine + formate + L-methionine + 3 H(+). The protein operates within cofactor biosynthesis; thiamine diphosphate biosynthesis. Its function is as follows. Catalyzes the synthesis of the hydroxymethylpyrimidine phosphate (HMP-P) moiety of thiamine from aminoimidazole ribotide (AIR) in a radical S-adenosyl-L-methionine (SAM)-dependent reaction. This Pelotomaculum thermopropionicum (strain DSM 13744 / JCM 10971 / SI) protein is Phosphomethylpyrimidine synthase.